The sequence spans 262 residues: Cytochrome c oxidase subunit 3 (262 aa).

6 consecutive transmembrane segments (helical) span residues 39–59 (YTMT…YQWW), 83–103 (GMIL…WAFF), 120–140 (VGII…ILLA), 163–183 (GLFF…YEYI), 201–221 (ATGF…ICFL), and 240–260 (AWYW…IYWW).

This sequence belongs to the cytochrome c oxidase subunit 3 family. As to quaternary structure, component of the cytochrome c oxidase (complex IV, CIV), a multisubunit enzyme composed of a catalytic core of 3 subunits and several supernumerary subunits. The complex exists as a monomer or a dimer and forms supercomplexes (SCs) in the inner mitochondrial membrane with ubiquinol-cytochrome c oxidoreductase (cytochrome b-c1 complex, complex III, CIII).

The protein localises to the mitochondrion inner membrane. The enzyme catalyses 4 Fe(II)-[cytochrome c] + O2 + 8 H(+)(in) = 4 Fe(III)-[cytochrome c] + 2 H2O + 4 H(+)(out). Functionally, component of the cytochrome c oxidase, the last enzyme in the mitochondrial electron transport chain which drives oxidative phosphorylation. The respiratory chain contains 3 multisubunit complexes succinate dehydrogenase (complex II, CII), ubiquinol-cytochrome c oxidoreductase (cytochrome b-c1 complex, complex III, CIII) and cytochrome c oxidase (complex IV, CIV), that cooperate to transfer electrons derived from NADH and succinate to molecular oxygen, creating an electrochemical gradient over the inner membrane that drives transmembrane transport and the ATP synthase. Cytochrome c oxidase is the component of the respiratory chain that catalyzes the reduction of oxygen to water. Electrons originating from reduced cytochrome c in the intermembrane space (IMS) are transferred via the dinuclear copper A center (CU(A)) of subunit 2 and heme A of subunit 1 to the active site in subunit 1, a binuclear center (BNC) formed by heme A3 and copper B (CU(B)). The BNC reduces molecular oxygen to 2 water molecules using 4 electrons from cytochrome c in the IMS and 4 protons from the mitochondrial matrix. In Anopheles quadrimaculatus (Common malaria mosquito), this protein is Cytochrome c oxidase subunit 3 (COIII).